The chain runs to 3753 residues: Intermembrane lipid transfer protein VPS13C (3753 aa).

A Chorein N-terminal domain is found at 3 to 116 (LESVVADLLN…LQDVKQKELS (114 aa)). Position 132 is a phosphoserine (Ser132). The segment covering 150–164 (GRKRKKHKKHFKKPF) has biased composition (basic residues). Residues 150–176 (GRKRKKHKKHFKKPFKGLDRSKDKPKE) form a disordered region. The segment covering 165–176 (KGLDRSKDKPKE) has biased composition (basic and acidic residues). Residue Thr614 is modified to Phosphothreonine. Ser619 is modified (phosphoserine). Thr624 is subject to Phosphothreonine. A phosphoserine mark is found at Ser737, Ser842, Ser872, and Ser874. The FFAT signature appears at 877-883 (EYFDAED). 2 positions are modified to phosphoserine: Ser1979 and Ser2473. The interval 2415–3309 (DYSLKDRAPF…IQQDIDALNA (895 aa)) is required for late endosome/lysosome localization. An SHR-BD domain is found at 2766–3016 (LSVFSPYWLI…RLFAWADPTG (251 aa)). Positions 3310 to 3753 (ELMETSMTDM…VRLLRPQLPS (444 aa)) are required for lipid droplet localization. 2 positions are modified to omega-N-methylarginine: Arg3519 and Arg3526. At Lys3538 the chain carries N6-acetyllysine. Ser3641 bears the Phosphoserine mark.

Belongs to the VPS13 family. Widely expressed.

Its subcellular location is the mitochondrion outer membrane. It is found in the lipid droplet. The protein localises to the endoplasmic reticulum membrane. It localises to the lysosome membrane. The protein resides in the late endosome membrane. Its function is as follows. Mediates the transfer of lipids between membranes at organelle contact sites. Necessary for proper mitochondrial function and maintenance of mitochondrial transmembrane potential. Involved in the regulation of PINK1/PRKN-mediated mitophagy in response to mitochondrial depolarization. The chain is Intermembrane lipid transfer protein VPS13C from Homo sapiens (Human).